We begin with the raw amino-acid sequence, 1048 residues long: [F-actin]-monooxygenase MICAL1 (1048 aa).

Positions 1 to 489 (MASPASTNPA…QDLYDMMDKE (489 aa)) are monooxygenase domain. FAD contacts are provided by residues Cys-95, 114 to 116 (EKR), 121 to 123 (RHN), Phe-181, Tyr-293, and Asp-393. A Phosphothreonine modification is found at Thr-475. The span at 488-502 (KEHAQRKSDEPDSRK) shows a compositional bias: basic and acidic residues. Positions 488–508 (KEHAQRKSDEPDSRKTTTGSA) are disordered. In terms of domain architecture, Calponin-homology (CH) spans 507-611 (SAGTEELLHW…YLSHFHSAFK (105 aa)). Position 616 is a phosphoserine (Ser-616). Residues 643-676 (TRAKVDEETPSTEEPPVSEPSMSPNTPELSEHQE) form a disordered region. Low complexity predominate over residues 654–666 (TEEPPVSEPSMSP). Residues 681–743 (ELCELCGKHL…LQHLPQEDQK (63 aa)) form the LIM zinc-binding domain. 8 residues coordinate Zn(2+): Cys-683, Cys-686, His-704, Cys-707, Cys-710, Cys-713, Cys-733, and His-736. Disordered regions lie at residues 741–787 (DQKE…QPAR), 805–825 (IIPDSGAEPPPKPPRSCSDLA), and 839–873 (PVQAPQVPEAIEKGDDEEEEEEEEEEEEEPLPPLE). A compositionally biased stretch (polar residues) spans 747–765 (NNGSLESQELPTPGDSNMQ). The segment covering 772–787 (PVTRVSPVPSPSQPAR) has biased composition (low complexity). Phosphoserine is present on residues Ser-777 and Ser-781. Coiled-coil stretches lie at residues 847–867 (EAIEKGDDEEEEEEEEEEEEE), 906–949 (EEEM…ESSS), and 974–1031 (EEAE…VNQR). The segment covering 852-868 (GDDEEEEEEEEEEEEEP) has biased composition (acidic residues). In terms of domain architecture, bMERB spans 905–1048 (KEEEMKRFCK…EERRLREMPA (144 aa)).

The protein belongs to the Mical family. As to quaternary structure, associates with the SH3 domain of NEDD9. Interacts with VIM and PLXNA3. Interacts with RAB1B, RAB8A, RAB10, RAB13 and RAB15 (in their GTP-bound forms); binding to RAB1B is of low affinity compared to other Rab proteins; at least in case of RAB8A and RAB10 can bind 2 molecules of the Rab proteins simultaneously. Interacts with STK38 and STK38L. Interacts with GRAF1/ARHGAP26, GRAF2/ARHGAP10, RAB8A, RAB8B and RAB10; may bind simultaneously to GRAFs and Rabs and connects GRAFs to Rabs. Does not interact with RAB1 and RAB11A. Requires FAD as cofactor. Expressed in the postnatal and adult hippocampus; found in dentate gyrus, the polymorphic layer, cornu ammonis (CA) 1-3 and in mossy fibers of the striatum lucidum. In adult hippocampus strongly expressed in CA3 pyramidial neurons.

It is found in the cytoplasm. The protein localises to the cytoskeleton. The protein resides in the endosome membrane. Its subcellular location is the midbody. The catalysed reaction is L-methionyl-[F-actin] + NADPH + O2 + H(+) = L-methionyl-(R)-S-oxide-[F-actin] + NADP(+) + H2O. It carries out the reaction NADPH + O2 + H(+) = H2O2 + NADP(+). Functionally, monooxygenase that promotes depolymerization of F-actin by mediating oxidation of specific methionine residues on actin to form methionine-sulfoxide, resulting in actin filament disassembly and preventing repolymerization. In the absence of actin, it also functions as a NADPH oxidase producing H(2)O(2). Acts as a cytoskeletal regulator that connects NEDD9 to intermediate filaments. Also acts as a negative regulator of apoptosis via its interaction with STK38 and STK38L; acts by antagonizing STK38 and STK38L activation by MST1/STK4. Involved in regulation of lamina-specific connectivity in the nervous system such as the development of lamina-restricted hippocampal connections. Through redox regulation of the actin cytoskeleton controls the intracellular distribution of secretory vesicles containing L1/neurofascin/NgCAM family proteins in neurons, thereby regulating their cell surface levels. May act as Rab effector protein and play a role in vesicle trafficking. Promotes endosomal tubule extension by associating with RAB8 (RAB8A or RAB8B), RAB10 and GRAF (GRAF1/ARHGAP26 or GRAF2/ARHGAP10) on the endosomal membrane which may connect GRAFs to Rabs, thereby participating in neosynthesized Rab8-Rab10-Rab11-dependent protein export. This is [F-actin]-monooxygenase MICAL1 (Mical1) from Mus musculus (Mouse).